A 337-amino-acid chain; its full sequence is Ribosomal RNA small subunit methyltransferase H (337 aa).

S-adenosyl-L-methionine is bound by residues 45-47 (GGH), Asp64, His91, Asp112, and Gln119.

It belongs to the methyltransferase superfamily. RsmH family.

Its subcellular location is the cytoplasm. The enzyme catalyses cytidine(1402) in 16S rRNA + S-adenosyl-L-methionine = N(4)-methylcytidine(1402) in 16S rRNA + S-adenosyl-L-homocysteine + H(+). Functionally, specifically methylates the N4 position of cytidine in position 1402 (C1402) of 16S rRNA. The chain is Ribosomal RNA small subunit methyltransferase H from Cutibacterium acnes (strain DSM 16379 / KPA171202) (Propionibacterium acnes).